The chain runs to 183 residues: Peptide deformylase (183 aa).

2 residues coordinate Fe cation: C111 and H154. E155 is an active-site residue. A Fe cation-binding site is contributed by H158.

Fe(2+) serves as cofactor.

It carries out the reaction N-terminal N-formyl-L-methionyl-[peptide] + H2O = N-terminal L-methionyl-[peptide] + formate. In terms of biological role, removes the formyl group from the N-terminal Met of newly synthesized proteins. Requires at least a dipeptide for an efficient rate of reaction. N-terminal L-methionine is a prerequisite for activity but the enzyme has broad specificity at other positions. This is Peptide deformylase from Staphylococcus aureus.